A 327-amino-acid polypeptide reads, in one-letter code: Glycerol-3-phosphate dehydrogenase [NAD(P)+] (327 aa).

The NADPH site is built by Trp-15, Arg-35, and Lys-109. 3 residues coordinate sn-glycerol 3-phosphate: Lys-109, Gly-137, and Ser-139. Ala-141 lines the NADPH pocket. Lys-192, Asp-245, Ser-255, Arg-256, and Asn-257 together coordinate sn-glycerol 3-phosphate. Lys-192 acts as the Proton acceptor in catalysis. Position 256 (Arg-256) interacts with NADPH. Positions 275 and 277 each coordinate NADPH.

It belongs to the NAD-dependent glycerol-3-phosphate dehydrogenase family.

The protein resides in the cytoplasm. The catalysed reaction is sn-glycerol 3-phosphate + NAD(+) = dihydroxyacetone phosphate + NADH + H(+). It catalyses the reaction sn-glycerol 3-phosphate + NADP(+) = dihydroxyacetone phosphate + NADPH + H(+). Its pathway is membrane lipid metabolism; glycerophospholipid metabolism. Functionally, catalyzes the reduction of the glycolytic intermediate dihydroxyacetone phosphate (DHAP) to sn-glycerol 3-phosphate (G3P), the key precursor for phospholipid synthesis. This chain is Glycerol-3-phosphate dehydrogenase [NAD(P)+], found in Chelativorans sp. (strain BNC1).